Reading from the N-terminus, the 157-residue chain is Endoribonuclease YbeY (157 aa).

Residues histidine 118, histidine 122, and histidine 128 each contribute to the Zn(2+) site.

The protein belongs to the endoribonuclease YbeY family. It depends on Zn(2+) as a cofactor.

Its subcellular location is the cytoplasm. Functionally, single strand-specific metallo-endoribonuclease involved in late-stage 70S ribosome quality control and in maturation of the 3' terminus of the 16S rRNA. The protein is Endoribonuclease YbeY of Shewanella loihica (strain ATCC BAA-1088 / PV-4).